Consider the following 891-residue polypeptide: Major core protein 4a precursor (891 aa).

This sequence belongs to the poxviridae protein P4a family. As to quaternary structure, interacts with P39/A4.

The protein localises to the virion. Core protein 4a is the most abundant virion protein. Major component of the virion core that undergoes proteolytic processing during the immature virion (IV) to mature virion (MV) transition. The polypeptide is Major core protein 4a precursor (Fowlpox virus (strain NVSL) (FPV)).